Here is a 448-residue protein sequence, read N- to C-terminus: uncharacterized protein (448 aa).

A compositionally biased stretch (basic and acidic residues) spans 187–198 (SKGDRGDADDRG). Disordered stretches follow at residues 187 to 221 (SKGD…LPTR), 243 to 270 (LQVP…GATM), and 291 to 361 (LSGL…LPNG). Low complexity predominate over residues 243–261 (LQVPGGTSAAIPSASSTPS). Residues 307-334 (FDERGQEVRDPADYEHSNEPDERRADDR) are compositionally biased toward basic and acidic residues.

It to M.tuberculosis Rv0025 and Rv0739.

This is an uncharacterized protein from Mycobacterium tuberculosis (strain ATCC 25618 / H37Rv).